The sequence spans 435 residues: GTPase Der (435 aa).

2 EngA-type G domains span residues 4-167 (PTLA…PSED) and 175-350 (IKFS…ENQT). GTP is bound by residues 10-17 (GRPNVGKS), 57-61 (DTGGI), 119-122 (NKVD), 181-188 (GRPNVGKS), 228-232 (DTAGI), and 293-296 (NKWD). Residues 351 to 435 (RRIQSSVLND…PIHIIARKRK (85 aa)) enclose the KH-like domain.

It belongs to the TRAFAC class TrmE-Era-EngA-EngB-Septin-like GTPase superfamily. EngA (Der) GTPase family. Associates with the 50S ribosomal subunit.

In terms of biological role, GTPase that plays an essential role in the late steps of ribosome biogenesis. The polypeptide is GTPase Der (Lacticaseibacillus casei (strain BL23) (Lactobacillus casei)).